The primary structure comprises 299 residues: Very long chain fatty acid elongase 5 (299 aa).

An N-acetylmethionine modification is found at Met-1. 7 consecutive transmembrane segments (helical) span residues 26 to 46 (WFLL…LLIV), 64 to 84 (ILVV…CELV), 112 to 132 (VLWW…FFIL), 139 to 158 (ITVL…WFVM), 168 to 187 (FGAT…YGLS), 205 to 225 (GQLL…IWPC), and 226 to 246 (TFPL…ITLF). Ser-285 is modified (phosphoserine).

The protein belongs to the ELO family. ELOVL5 subfamily. As to quaternary structure, interacts with TECR.

It is found in the endoplasmic reticulum membrane. Its subcellular location is the cell projection. The protein localises to the dendrite. The catalysed reaction is a very-long-chain acyl-CoA + malonyl-CoA + H(+) = a very-long-chain 3-oxoacyl-CoA + CO2 + CoA. It carries out the reaction (6Z,9Z,12Z)-octadecatrienoyl-CoA + malonyl-CoA + H(+) = (8Z,11Z,14Z)-3-oxoeicosatrienoyl-CoA + CO2 + CoA. The enzyme catalyses (9Z,12Z,15Z)-octadecatrienoyl-CoA + malonyl-CoA + H(+) = (11Z,14Z,17Z)-3-oxoeicosatrienoyl-CoA + CO2 + CoA. It catalyses the reaction (9Z)-hexadecenoyl-CoA + malonyl-CoA + H(+) = 3-oxo-(11Z)-octadecenoyl-CoA + CO2 + CoA. The catalysed reaction is (9Z)-octadecenoyl-CoA + malonyl-CoA + H(+) = 3-oxo-(11Z)-eicosenoyl-CoA + CO2 + CoA. It carries out the reaction (11Z)-octadecenoyl-CoA + malonyl-CoA + H(+) = 3-oxo-(13Z)-eicosenoyl-CoA + CO2 + CoA. The enzyme catalyses (9Z,12Z)-octadecadienoyl-CoA + malonyl-CoA + H(+) = (11Z,14Z)-3-oxoicosa-11,14-dienoyl-CoA + CO2 + CoA. It catalyses the reaction (6Z,9Z,12Z,15Z)-octadecatetraenoyl-CoA + malonyl-CoA + H(+) = (8Z,11Z,14Z,17Z)-3-oxoicosatetraenoyl-CoA + CO2 + CoA. The catalysed reaction is (5Z,8Z,11Z,14Z)-eicosatetraenoyl-CoA + malonyl-CoA + H(+) = (7Z,10Z,13Z,16Z)-3-oxodocosatetraenoyl-CoA + CO2 + CoA. It carries out the reaction (5Z,8Z,11Z,14Z,17Z)-eicosapentaenoyl-CoA + malonyl-CoA + H(+) = 3-oxo-(7Z,10Z,13Z,16Z,19Z)-docosapentaenoyl-CoA + CO2 + CoA. It functions in the pathway lipid metabolism; polyunsaturated fatty acid biosynthesis. Catalyzes the first and rate-limiting reaction of the four reactions that constitute the long-chain fatty acids elongation cycle. This endoplasmic reticulum-bound enzymatic process allows the addition of 2 carbons to the chain of long- and very long-chain fatty acids (VLCFAs) per cycle. Condensing enzyme that acts specifically toward polyunsaturated acyl-CoA with the higher activity toward C18:3(n-6) acyl-CoA. May participate in the production of monounsaturated and of polyunsaturated VLCFAs of different chain lengths that are involved in multiple biological processes as precursors of membrane lipids and lipid mediators. In conditions where the essential linoleic and alpha linoleic fatty acids are lacking it is also involved in the synthesis of Mead acid from oleic acid. The chain is Very long chain fatty acid elongase 5 from Bos taurus (Bovine).